The sequence spans 286 residues: Tyrosine recombinase Tlet_1492 (286 aa).

One can recognise a Core-binding (CB) domain in the interval 1–86 (MERILQNFSD…SLRSFFNYLQ (86 aa)). Residues 107 to 280 (RIPDFLLPSE…VDQEKFDAIN (174 aa)) form the Tyr recombinase domain. Active-site residues include R143, K168, H232, R235, and H258. The active-site O-(3'-phospho-DNA)-tyrosine intermediate is Y267.

Belongs to the 'phage' integrase family.

It localises to the cytoplasm. In terms of biological role, site-specific tyrosine recombinase, which acts by catalyzing the cutting and rejoining of the recombining DNA molecules. In Pseudothermotoga lettingae (strain ATCC BAA-301 / DSM 14385 / NBRC 107922 / TMO) (Thermotoga lettingae), this protein is Tyrosine recombinase Tlet_1492.